A 754-amino-acid polypeptide reads, in one-letter code: Disintegrin and metalloproteinase domain-containing protein 7 (754 aa).

Positions 1–18 are cleaved as a signal peptide; the sequence is MLPGCIFLMILLIPQVKE. A propeptide spanning residues 19–176 is cleaved from the precursor; sequence KFILGVEGQQ…NYSCTELNFT (158 aa). Over 19 to 668 the chain is Extracellular; the sequence is KFILGVEGQQ…ACEETLHVTN (650 aa). N-linked (GlcNAc...) asparagine glycosylation is found at Asn-84, Asn-167, Asn-174, and Asn-184. Residues 199-394 form the Peptidase M12B domain; sequence KYVELFIVAD…YKPTCMLNIP (196 aa). Disulfide bonds link Cys-310–Cys-389, Cys-350–Cys-373, Cys-352–Cys-357, and Cys-460–Cys-480. The 87-residue stretch at 402-488 folds into the Disintegrin domain; it reads FQFCGNKKLD…ACPKDQFRVN (87 aa). 2 N-linked (GlcNAc...) asparagine glycosylation sites follow: Asn-584 and Asn-668. The chain crosses the membrane as a helical span at residues 669 to 689; sequence ITILVVVLVLVIVGIGVLILL. Over 690 to 754 the chain is Cytoplasmic; that stretch reads VRYRKCIKLK…GIADPNQSAK (65 aa).

Interacts with ITM2B in sperm; the interaction increases following capacitation. Interacts with HSPA5 and CANX.

It localises to the membrane. Functionally, required for normal male fertility via maintenance of epithelial cell morphology in the caput epididymis and subsequently correct epididymis lumen structure required for sperm development. Plays a role in sperm motility, flagella morphology and tyrosine phosphorylation during sperm capacitance. Plays a role in normal expression levels of HSPA5, ITM2B and ADAM2 in sperm both prior to and post-capacitation. This is a non catalytic metalloprotease-like protein. This chain is Disintegrin and metalloproteinase domain-containing protein 7, found in Homo sapiens (Human).